We begin with the raw amino-acid sequence, 238 residues long: Alpha-tubulin N-acetyltransferase (238 aa).

The 196-residue stretch at 1–196 (MEFDFDISQS…NNFVVFEDLF (196 aa)) folds into the N-acetyltransferase domain. Acetyl-CoA is bound by residues 129 to 142 (FYVHESQQRTGNGK) and 165 to 174 (SFKFLSFLQK).

Belongs to the acetyltransferase ATAT1 family.

It catalyses the reaction L-lysyl-[alpha-tubulin] + acetyl-CoA = N(6)-acetyl-L-lysyl-[alpha-tubulin] + CoA + H(+). In terms of biological role, specifically acetylates 'Lys-40' in alpha-tubulin on the lumenal side of microtubules. Promotes microtubule destabilization and accelerates microtubule dynamics; this activity may be independent of acetylation activity. Acetylates alpha-tubulin with a slow enzymatic rate, due to a catalytic site that is not optimized for acetyl transfer. Enters the microtubule through each end and diffuses quickly throughout the lumen of microtubules. Acetylates only long/old microtubules because of its slow acetylation rate since it does not have time to act on dynamically unstable microtubules before the enzyme is released. The polypeptide is Alpha-tubulin N-acetyltransferase (Trichoplax adhaerens (Trichoplax reptans)).